The primary structure comprises 354 residues: NADH-quinone oxidoreductase subunit H (354 aa).

The next 8 membrane-spanning stretches (helical) occupy residues 22 to 42, 91 to 111, 124 to 144, 168 to 188, 203 to 223, 255 to 275, 291 to 311, and 326 to 346; these read ILIRAVLIVVPLLLCVAYLIL, YLIAPLMVLMPAVAIWAVIPF, LLYVMAISSVGVYGVILAGWA, MGFALVTVLMVSGSLNLSAIV, VLSWNWIPLLPMFGVYFISGV, LFFLAEYINMIIISTITALLF, IPGFFWLLIKVFLLLSVFIWI, and LGWKVFIPLTVGWLIIVAIWI.

It belongs to the complex I subunit 1 family. In terms of assembly, NDH-1 is composed of 14 different subunits. Subunits NuoA, H, J, K, L, M, N constitute the membrane sector of the complex.

The protein localises to the cell inner membrane. It carries out the reaction a quinone + NADH + 5 H(+)(in) = a quinol + NAD(+) + 4 H(+)(out). In terms of biological role, NDH-1 shuttles electrons from NADH, via FMN and iron-sulfur (Fe-S) centers, to quinones in the respiratory chain. The immediate electron acceptor for the enzyme in this species is believed to be ubiquinone. Couples the redox reaction to proton translocation (for every two electrons transferred, four hydrogen ions are translocated across the cytoplasmic membrane), and thus conserves the redox energy in a proton gradient. This subunit may bind ubiquinone. The polypeptide is NADH-quinone oxidoreductase subunit H (Cupriavidus pinatubonensis (strain JMP 134 / LMG 1197) (Cupriavidus necator (strain JMP 134))).